Reading from the N-terminus, the 243-residue chain is Probable transcriptional regulatory protein Smlt3713 (243 aa).

The protein belongs to the TACO1 family.

The protein resides in the cytoplasm. This Stenotrophomonas maltophilia (strain K279a) protein is Probable transcriptional regulatory protein Smlt3713.